Consider the following 193-residue polypeptide: 3-isopropylmalate dehydratase small subunit (193 aa).

The protein belongs to the LeuD family. LeuD type 1 subfamily. As to quaternary structure, heterodimer of LeuC and LeuD.

It catalyses the reaction (2R,3S)-3-isopropylmalate = (2S)-2-isopropylmalate. It participates in amino-acid biosynthesis; L-leucine biosynthesis; L-leucine from 3-methyl-2-oxobutanoate: step 2/4. In terms of biological role, catalyzes the isomerization between 2-isopropylmalate and 3-isopropylmalate, via the formation of 2-isopropylmaleate. In Listeria monocytogenes serovar 1/2a (strain ATCC BAA-679 / EGD-e), this protein is 3-isopropylmalate dehydratase small subunit.